Reading from the N-terminus, the 102-residue chain is MVQKAEIKLWSTNVESLNQVVEQIKAIAKKTGVRMRGPIPLPTRRLIVPTLKLPHGEGSKKWDKWELRIHKRLVILDADERVIRQIMRVRVPEDVYIEIRLR.

The protein belongs to the universal ribosomal protein uS10 family. In terms of assembly, part of the 30S ribosomal subunit.

In terms of biological role, involved in the binding of tRNA to the ribosomes. The sequence is that of Small ribosomal subunit protein uS10 from Hyperthermus butylicus (strain DSM 5456 / JCM 9403 / PLM1-5).